A 106-amino-acid polypeptide reads, in one-letter code: ATP-dependent Clp protease adapter protein ClpS (106 aa).

It belongs to the ClpS family. Binds to the N-terminal domain of the chaperone ClpA.

Functionally, involved in the modulation of the specificity of the ClpAP-mediated ATP-dependent protein degradation. The protein is ATP-dependent Clp protease adapter protein ClpS of Salmonella gallinarum (strain 287/91 / NCTC 13346).